The chain runs to 601 residues: Aspartate--tRNA(Asp/Asn) ligase (601 aa).

Glu-177 is a binding site for L-aspartate. The aspartate stretch occupies residues 201–204 (QLFK). Arg-223 provides a ligand contact to L-aspartate. ATP-binding positions include 223 to 225 (RDE) and Gln-232. His-455 is a binding site for L-aspartate. Glu-489 contacts ATP. Arg-496 lines the L-aspartate pocket. Residue 541 to 544 (GWDR) coordinates ATP. A disordered region spans residues 568 to 601 (VDPLTDAPAPIPLEQRRETGVDFKPKKKTDESAV). Basic and acidic residues predominate over residues 581–601 (EQRRETGVDFKPKKKTDESAV).

This sequence belongs to the class-II aminoacyl-tRNA synthetase family. Type 1 subfamily. As to quaternary structure, homodimer.

The protein resides in the cytoplasm. It carries out the reaction tRNA(Asx) + L-aspartate + ATP = L-aspartyl-tRNA(Asx) + AMP + diphosphate. In terms of biological role, aspartyl-tRNA synthetase with relaxed tRNA specificity since it is able to aspartylate not only its cognate tRNA(Asp) but also tRNA(Asn). Reaction proceeds in two steps: L-aspartate is first activated by ATP to form Asp-AMP and then transferred to the acceptor end of tRNA(Asp/Asn). The polypeptide is Aspartate--tRNA(Asp/Asn) ligase (Corynebacterium diphtheriae (strain ATCC 700971 / NCTC 13129 / Biotype gravis)).